A 126-amino-acid polypeptide reads, in one-letter code: Glycine cleavage system H protein (126 aa).

The region spanning 24 to 105 (TLTVGITDHA…AYGVWLFKIK (82 aa)) is the Lipoyl-binding domain. Residue K65 is modified to N6-lipoyllysine.

Belongs to the GcvH family. As to quaternary structure, the glycine cleavage system is composed of four proteins: P, T, L and H. (R)-lipoate serves as cofactor.

Functionally, the glycine cleavage system catalyzes the degradation of glycine. The H protein shuttles the methylamine group of glycine from the P protein to the T protein. The protein is Glycine cleavage system H protein of Burkholderia cenocepacia (strain HI2424).